We begin with the raw amino-acid sequence, 662 residues long: DNA ligase (662 aa).

Residues 34–38 (DYDYD), 83–84 (SI), and E113 contribute to the NAD(+) site. The active-site N6-AMP-lysine intermediate is K115. NAD(+) contacts are provided by R136, E172, K286, and K310. 4 residues coordinate Zn(2+): C404, C407, C422, and C427. A BRCT domain is found at 583–662 (RASASCQGKT…SDLLKILYPN (80 aa)).

This sequence belongs to the NAD-dependent DNA ligase family. LigA subfamily. Mg(2+) serves as cofactor. Requires Mn(2+) as cofactor.

It catalyses the reaction NAD(+) + (deoxyribonucleotide)n-3'-hydroxyl + 5'-phospho-(deoxyribonucleotide)m = (deoxyribonucleotide)n+m + AMP + beta-nicotinamide D-nucleotide.. DNA ligase that catalyzes the formation of phosphodiester linkages between 5'-phosphoryl and 3'-hydroxyl groups in double-stranded DNA using NAD as a coenzyme and as the energy source for the reaction. It is essential for DNA replication and repair of damaged DNA. The protein is DNA ligase of Chlamydia felis (strain Fe/C-56) (Chlamydophila felis).